We begin with the raw amino-acid sequence, 657 residues long: Threonine--tRNA ligase (657 aa).

In terms of domain architecture, TGS spans 7–70 (ILAVIALTLP…TADAAIEIIT (64 aa)). The tract at residues 253 to 555 (DHRKLGAELE…LIEHTAGNFP (303 aa)) is catalytic. Cys-351, His-402, and His-532 together coordinate Zn(2+).

This sequence belongs to the class-II aminoacyl-tRNA synthetase family. In terms of assembly, homodimer. The cofactor is Zn(2+).

Its subcellular location is the cytoplasm. It catalyses the reaction tRNA(Thr) + L-threonine + ATP = L-threonyl-tRNA(Thr) + AMP + diphosphate + H(+). In terms of biological role, catalyzes the attachment of threonine to tRNA(Thr) in a two-step reaction: L-threonine is first activated by ATP to form Thr-AMP and then transferred to the acceptor end of tRNA(Thr). Also edits incorrectly charged L-seryl-tRNA(Thr). This chain is Threonine--tRNA ligase, found in Pelodictyon phaeoclathratiforme (strain DSM 5477 / BU-1).